The primary structure comprises 351 residues: Cytochrome c biogenesis protein CcsA (351 aa).

A run of 8 helical transmembrane segments spans residues Val-17–Ile-37, Asn-38–Ala-58, Leu-68–Ile-88, Leu-97–Leu-117, Met-143–Ile-163, Ile-259–Asn-279, Trp-286–Leu-306, and Ala-320–Leu-340.

It belongs to the CcmF/CycK/Ccl1/NrfE/CcsA family. In terms of assembly, may interact with ccs1.

The protein resides in the cellular thylakoid membrane. In terms of biological role, required during biogenesis of c-type cytochromes (cytochrome c6 and cytochrome f) at the step of heme attachment. This chain is Cytochrome c biogenesis protein CcsA, found in Trichormus variabilis (strain ATCC 29413 / PCC 7937) (Anabaena variabilis).